The following is a 596-amino-acid chain: NADH-quinone oxidoreductase subunit C/D (596 aa).

The NADH dehydrogenase I subunit C stretch occupies residues 1–186; the sequence is MTDLTAQDAA…DPFELTKAKQ (186 aa). The tract at residues 210 to 596 is NADH dehydrogenase I subunit D; it reads DFMFLNLGPN…IDFVMSDVDR (387 aa).

The protein in the N-terminal section; belongs to the complex I 30 kDa subunit family. This sequence in the C-terminal section; belongs to the complex I 49 kDa subunit family. In terms of assembly, NDH-1 is composed of 13 different subunits. Subunits NuoB, CD, E, F, and G constitute the peripheral sector of the complex.

The protein resides in the cell inner membrane. It catalyses the reaction a quinone + NADH + 5 H(+)(in) = a quinol + NAD(+) + 4 H(+)(out). Its function is as follows. NDH-1 shuttles electrons from NADH, via FMN and iron-sulfur (Fe-S) centers, to quinones in the respiratory chain. The immediate electron acceptor for the enzyme in this species is believed to be ubiquinone. Couples the redox reaction to proton translocation (for every two electrons transferred, four hydrogen ions are translocated across the cytoplasmic membrane), and thus conserves the redox energy in a proton gradient. In Salmonella dublin (strain CT_02021853), this protein is NADH-quinone oxidoreductase subunit C/D.